The primary structure comprises 235 residues: MLTYDRWETVEKPSFPSDNETKGALDVLAWAYREYGDEIVYACSFGIEGIVLIDLISQVKPDAEIVFLDTGLHFQETYDTIAKVKETYPSLRIIMKQPHLTLEEQAAQFGDELWKRDPNKCCELRKVIPLREVLTGVTAWISGLRREQSPTRRHVEYVNKDDKFRSIKVCPLIHWTWKDVWNYVYKHSLPYNVLHDRGYPSIGCAPCTAPALDPNDLRSGRWAGQGKTECGLHLT.

C121, C122, C204, and C207 together coordinate [4Fe-4S] cluster. C230 (nucleophile; cysteine thiosulfonate intermediate) is an active-site residue.

It belongs to the PAPS reductase family. CysH subfamily. It depends on [4Fe-4S] cluster as a cofactor.

It is found in the cytoplasm. It catalyses the reaction [thioredoxin]-disulfide + sulfite + AMP + 2 H(+) = adenosine 5'-phosphosulfate + [thioredoxin]-dithiol. Its pathway is sulfur metabolism; hydrogen sulfide biosynthesis; sulfite from sulfate. In terms of biological role, catalyzes the formation of sulfite from adenosine 5'-phosphosulfate (APS) using thioredoxin as an electron donor. The sequence is that of Adenosine 5'-phosphosulfate reductase from Geobacillus thermodenitrificans (strain NG80-2).